A 72-amino-acid polypeptide reads, in one-letter code: uncharacterized protein (72 aa).

This is an uncharacterized protein from Rickettsia conorii (strain ATCC VR-613 / Malish 7).